A 3063-amino-acid polypeptide reads, in one-letter code: Genome polyprotein (3063 aa).

The region spanning 141–284 (KLTEGQMNHL…QSILNSMIQF (144 aa)) is the Peptidase S30 domain. Residues His-192, Asp-201, and Ser-235 each act as for P1 proteinase activity in the active site. The short motif at 334–337 (KITC) is the Involved in interaction with stylet and aphid transmission element. The Involved in virions binding and aphid transmission motif lies at 592-594 (PTK). The 123-residue stretch at 618-740 (LYIAKQGYCY…ESDIKHYRVG (123 aa)) folds into the Peptidase C6 domain. Catalysis depends on for helper component proteinase activity residues Cys-626 and His-699. Residues 1229–1381 (DIAHSEHLDF…TQQPVKLIVE (153 aa)) enclose the Helicase ATP-binding domain. ATP is bound at residue 1242-1249 (GAVGSGKS). A DECH box motif is present at residues 1331-1334 (DECH). The region spanning 1400-1559 (DVVQFGSNVL…NLPVMTGGVS (160 aa)) is the Helicase C-terminal domain. The short motif at 1884 to 1892 (RKKGKGKGT) is the Nuclear localization signal element. O-(5'-phospho-RNA)-tyrosine is present on Tyr-1907. Positions 1949 to 1964 (KMVENDDIEMQALGSN) are interaction with host EIF4E. Positions 2032–2250 (AKSLMRGLRD…VLWGPLKLKD (219 aa)) constitute a Peptidase C4 domain. Catalysis depends on for nuclear inclusion protein A activity residues His-2077, Asp-2112, and Cys-2182. Positions 2519 to 2643 (WVYCDADGSQ…AVNPEKESIL (125 aa)) constitute a RdRp catalytic domain. The tract at residues 2798-2841 (NDTIDAGGSNKKDAKPEQGSIQPNPNKGKDKDVNAGTSGTHTVP) is disordered. Thr-3046 is modified (phosphothreonine).

Belongs to the potyviridae genome polyprotein family. In terms of assembly, interacts with host eIF4E protein (via cap-binding region); this interaction mediates the translation of the VPg-viral RNA conjugates. Part of a complex that comprises VPg, RNA, host EIF4E and EIF4G; this interaction mediates the translation of the VPg-viral RNA conjugates. Interaction is possible in susceptible hosts but impaired in resistant plants: the VPg of strain LYE84 interacts with tomato eIF4E1 and eIF4E2 as well as with the Capsicum annuum eIF4E1 susceptible allele pvr2(+) but not with resistant alleles pvr2(1), pvr2(2), pvr2(3), pvr2(4), pvr2(5), pvr2(6), pvr2(7), pvr2(8) and pvr2(9), the VPg of strain SON41 interacts with C.annuum eIF4E1 susceptible alleles pvr2(+), pvr2(1), pvr2(2), pvr2(3) and pvr2(4) but not with resistant alleles pvr2(5), pvr2(6), pvr2(7), pvr2(8) and pvr2(9), the VPg of strain LYE90 interacts only with tomato eIF4E1. In terms of processing, VPg is uridylylated by the polymerase and is covalently attached to the 5'-end of the genomic RNA. This uridylylated form acts as a nucleotide-peptide primer for the polymerase. Potyviral RNA is expressed as two polyproteins which undergo post-translational proteolytic processing. Genome polyprotein is processed by NIa-pro, P1 and HC-pro proteinases resulting in the production of at least ten individual proteins. P3N-PIPO polyprotein is cleaved by P1 and HC-pro proteinases resulting in the production of three individual proteins. The P1 proteinase and the HC-pro cleave only their respective C-termini autocatalytically. 6K1 is essential for proper proteolytic separation of P3 from CI.

The protein localises to the host cytoplasmic vesicle. Its subcellular location is the host nucleus. It localises to the virion. It carries out the reaction RNA(n) + a ribonucleoside 5'-triphosphate = RNA(n+1) + diphosphate. The catalysed reaction is Hydrolyzes glutaminyl bonds, and activity is further restricted by preferences for the amino acids in P6 - P1' that vary with the species of potyvirus, e.g. Glu-Xaa-Xaa-Tyr-Xaa-Gln-|-(Ser or Gly) for the enzyme from tobacco etch virus. The natural substrate is the viral polyprotein, but other proteins and oligopeptides containing the appropriate consensus sequence are also cleaved.. It catalyses the reaction Hydrolyzes a Gly-|-Gly bond at its own C-terminus, commonly in the sequence -Tyr-Xaa-Val-Gly-|-Gly, in the processing of the potyviral polyprotein.. In terms of biological role, required for aphid transmission and also has proteolytic activity. Only cleaves a Gly-Gly dipeptide at its own C-terminus. Interacts with virions and aphid stylets. Acts as a suppressor of RNA-mediated gene silencing, also known as post-transcriptional gene silencing (PTGS), a mechanism of plant viral defense that limits the accumulation of viral RNAs. May have RNA-binding activity. Its function is as follows. Has helicase activity. It may be involved in replication. Indispensable for virus replication. Reduces the abundance of host transcripts related to jasmonic acid biosynthesis therefore altering the host defenses. In order to increase its own stability, decreases host protein degradation pathways. Functionally, indispensable for virus replication. In terms of biological role, mediates the cap-independent, EIF4E-dependent translation of viral genomic RNAs. Binds to the cap-binding site of host EIF4E and thus interferes with the host EIF4E-dependent mRNA export and translation. VPg-RNA directly binds EIF4E and is a template for transcription. Also forms trimeric complexes with EIF4E-EIF4G, which are templates for translation. Its function is as follows. Has RNA-binding and proteolytic activities. An RNA-dependent RNA polymerase that plays an essential role in the virus replication. Functionally, involved in aphid transmission, cell-to-cell and systemis movement, encapsidation of the viral RNA and in the regulation of viral RNA amplification. The sequence is that of Genome polyprotein from Potato virus Y (strain N) (PVY).